Here is a 274-residue protein sequence, read N- to C-terminus: Thiamine kinase (274 aa).

This sequence belongs to the thiamine kinase family.

It catalyses the reaction thiamine + ATP = thiamine phosphate + ADP + H(+). Its pathway is cofactor biosynthesis; thiamine diphosphate biosynthesis; thiamine phosphate from thiamine: step 1/1. Functionally, catalyzes the ATP-dependent phosphorylation of thiamine to thiamine phosphate. Is involved in thiamine salvage. This chain is Thiamine kinase, found in Escherichia coli O6:K15:H31 (strain 536 / UPEC).